The chain runs to 89 residues: Small ribosomal subunit protein bS18 (89 aa).

The segment covering 1-15 (MTTANTNETAAAAAA) has biased composition (low complexity). Residues 1–22 (MTTANTNETAAAAAAKNRRNKK) form a disordered region.

Belongs to the bacterial ribosomal protein bS18 family. In terms of assembly, part of the 30S ribosomal subunit. Forms a tight heterodimer with protein bS6.

In terms of biological role, binds as a heterodimer with protein bS6 to the central domain of the 16S rRNA, where it helps stabilize the platform of the 30S subunit. In Caldanaerobacter subterraneus subsp. tengcongensis (strain DSM 15242 / JCM 11007 / NBRC 100824 / MB4) (Thermoanaerobacter tengcongensis), this protein is Small ribosomal subunit protein bS18.